Here is a 318-residue protein sequence, read N- to C-terminus: Protein W (318 aa).

2 disordered regions span residues 1-23 and 38-318; these read MDQD…GGRE and SEPT…KKGA. The span at 7-20 shows a compositional bias: basic and acidic residues; the sequence is ILKEDSEVEREAPG. Positions 50–59 are enriched in polar residues; it reads LHNTINTPQG. Ser68 is subject to Phosphoserine; by host. Residues 83-101 are compositionally biased toward basic and acidic residues; the sequence is RSGEESRVSGRTSKPEAEA. At Ser125 the chain carries Phosphoserine; by host. The segment covering 150-168 has biased composition (basic and acidic residues); sequence GIEDENREMAAHPDKRGED. Polar residues predominate over residues 191–206; the sequence is ASNNGRSMEPGSSHSA. Phosphoserine; by host is present on residues Ser192, Ser249, Ser257, and Ser260.

In Sendai virus (strain Fushimi) (SeV), this protein is Protein W (P/V/C).